The sequence spans 225 residues: Urease accessory protein UreG (225 aa).

Residue 25 to 32 (GPVGAGKT) participates in GTP binding.

It belongs to the SIMIBI class G3E GTPase family. UreG subfamily. As to quaternary structure, homodimer. UreD, UreF and UreG form a complex that acts as a GTP-hydrolysis-dependent molecular chaperone, activating the urease apoprotein by helping to assemble the nickel containing metallocenter of UreC. The UreE protein probably delivers the nickel.

Its subcellular location is the cytoplasm. Its function is as follows. Facilitates the functional incorporation of the urease nickel metallocenter. This process requires GTP hydrolysis, probably effectuated by UreG. The chain is Urease accessory protein UreG from Haemophilus influenzae (strain ATCC 51907 / DSM 11121 / KW20 / Rd).